Consider the following 258-residue polypeptide: Trans-aconitate 2-methyltransferase (258 aa).

The protein belongs to the methyltransferase superfamily. Tam family.

The protein localises to the cytoplasm. The enzyme catalyses trans-aconitate + S-adenosyl-L-methionine = (E)-3-(methoxycarbonyl)pent-2-enedioate + S-adenosyl-L-homocysteine. In terms of biological role, catalyzes the S-adenosylmethionine monomethyl esterification of trans-aconitate. The polypeptide is Trans-aconitate 2-methyltransferase (Methylobacterium nodulans (strain LMG 21967 / CNCM I-2342 / ORS 2060)).